A 501-amino-acid chain; its full sequence is Aspartate--tRNA ligase, cytoplasmic (501 aa).

Threonine 52 carries the post-translational modification Phosphothreonine. Lysine 74 bears the N6-acetyllysine mark. Position 229 (glutamate 229) interacts with L-aspartate. The residue at position 249 (serine 249) is a Phosphoserine. Residues 251–254 (QLYK) are aspartate. Arginine 273 contributes to the L-aspartate binding site. Residues 273 to 275 (RAE) and 281 to 283 (RHL) contribute to the ATP site. Lysine 374 is modified (N6-acetyllysine). Residues 411–415 (KQSNS) form a binding site for the 3'-end of tRNA region. Glutamate 424 is a binding site for ATP. 2 residues coordinate L-aspartate: serine 427 and arginine 431. 472–475 (GLER) provides a ligand contact to ATP. Threonine 500 carries the phosphothreonine; by PKA modification.

It belongs to the class-II aminoacyl-tRNA synthetase family. Type 2 subfamily. Homodimer. Part of a multisubunit complex that groups tRNA ligases for Arg (RARS1), Asp (DARS1), Gln (QARS1), Ile (IARS1), Leu (LARS1), Lys (KARS1), Met (MARS1) the bifunctional ligase for Glu and Pro (EPRS1) and the auxiliary subunits AIMP1/p43, AIMP2/p38 and EEF1E1/p18. Expression in the developing and adult brain shows similar patterns. Highly expressed in the ventricular and subventricular zones, including hippocampal subfields, the midlateral temporal cortex and the frontal polar cortex. The cerebellum, cerebral cortex, hippocampus, and lateral ventricle show preferential neuronal expression. Expression in the peripheral neurons is evident in the colon.

Its subcellular location is the cytoplasm. It is found in the cytosol. It carries out the reaction tRNA(Asp) + L-aspartate + ATP = L-aspartyl-tRNA(Asp) + AMP + diphosphate. Catalyzes the specific attachment of an amino acid to its cognate tRNA in a 2 step reaction: the amino acid (AA) is first activated by ATP to form AA-AMP and then transferred to the acceptor end of the tRNA. The chain is Aspartate--tRNA ligase, cytoplasmic from Homo sapiens (Human).